Reading from the N-terminus, the 202-residue chain is Guanylate kinase (202 aa).

A Guanylate kinase-like domain is found at 18-200; it reads LKPVVVFGPS…AYKQLEAICL (183 aa). ATP is bound at residue 25–32; it reads GPSGVGKS.

Belongs to the guanylate kinase family.

The enzyme catalyses GMP + ATP = GDP + ADP. Its function is as follows. Essential for recycling GMP and indirectly, cGMP. The protein is Guanylate kinase of Schizosaccharomyces pombe (strain 972 / ATCC 24843) (Fission yeast).